A 523-amino-acid chain; its full sequence is ADP-ribosylation factor GTPase-activating protein 3 (523 aa).

An Arf-GAP domain is found at 10–126 (LAIFKRLRSV…IKTLATQATR (117 aa)). The C4-type zinc-finger motif lies at 25–48 (CFDCGAKNPSWASISYGVFLCIDC). Residues 162–206 (GAMQASAQPESASSTPWGLETTPEKHEGGPGQGPSVEGLNTPGKA) form a disordered region. The span at 164 to 177 (MQASAQPESASSTP) shows a compositional bias: polar residues. Phosphoserine is present on residues S231 and S241. Positions 248 to 269 (QAQAVDKRKEQEDLARGAPKEE) are disordered. Phosphoserine is present on residues S270, S274, and S331. The interval 308–424 (GFGSCRSGIS…YEPIGSTDEA (117 aa)) is disordered. Residues 314–332 (SGISHSVTSDMQTIEQESP) show a composition bias toward polar residues. Residues 348–361 (SYFSSSSKWSEQSS) are compositionally biased toward low complexity. The residue at position 377 (S377) is a Phosphoserine. Basic and acidic residues predominate over residues 385–396 (YWKKDSSRDPEP). 6 positions are modified to phosphoserine: S435, S458, S460, S462, S464, and S465.

Its subcellular location is the cytoplasm. The protein resides in the golgi apparatus membrane. Its activity is regulated as follows. GAP activity stimulated by phosphatidylinositol 4,5-bisphosphate (PIP2). GTPase-activating protein (GAP) for ADP ribosylation factor 1 (ARF1). Hydrolysis of ARF1-bound GTP may lead to dissociation of coatomer from Golgi-derived membranes to allow fusion with target membranes. The chain is ADP-ribosylation factor GTPase-activating protein 3 (Arfgap3) from Mus musculus (Mouse).